A 219-amino-acid chain; its full sequence is Transmembrane protein 17A (219 aa).

N-linked (GlcNAc...) asparagine glycosylation is found at Asn18 and Asn27. 4 consecutive transmembrane segments (helical) span residues 56–76, 83–103, 121–141, and 153–173; these read MMLY…LLML, LPVY…IFEV, LAGF…FFIT, and AVHS…FLAL.

This sequence belongs to the TMEM17 family. As to quaternary structure, part of the tectonic-like complex (also named B9 complex).

The protein localises to the cell projection. The protein resides in the cilium membrane. Its function is as follows. Transmembrane component of the tectonic-like complex, a complex localized at the transition zone of primary cilia and acting as a barrier that prevents diffusion of transmembrane proteins between the cilia and plasma membranes. Required for ciliogenesis and sonic hedgehog/SHH signaling. The polypeptide is Transmembrane protein 17A (tmem17a) (Danio rerio (Zebrafish)).